We begin with the raw amino-acid sequence, 386 residues long: ADP,ATP carrier protein 1, mitochondrial (386 aa).

A mitochondrion-targeting transit peptide spans M1 to Q76. Solcar repeat units lie at residues S84–L177, K189–V281, and D289–I375. Transmembrane regions (helical) follow at residues F86–L113, T154–F178, Y187–L207, F257–L278, and F292–I312. ADP contacts are provided by R159 and K171. R316 lines the ADP pocket. The segment at R316–M321 is important for transport activity. The short motif at R316 to M321 is the Nucleotide carrier signature motif element. The helical transmembrane segment at A352–L372 threads the bilayer.

The protein belongs to the mitochondrial carrier (TC 2.A.29) family. Monomer.

The protein resides in the mitochondrion inner membrane. It catalyses the reaction ADP(in) + ATP(out) = ADP(out) + ATP(in). Its activity is regulated as follows. The matrix-open state (m-state) is inhibited by the membrane-permeable bongkrekic acid (BKA). The cytoplasmic-open state (c-state) is inhibited by the membrane-impermeable toxic inhibitor carboxyatractyloside (CATR). ADP:ATP antiporter that mediates import of ADP into the mitochondrial matrix for ATP synthesis, and export of ATP out to fuel the cell. Cycles between the cytoplasmic-open state (c-state) and the matrix-open state (m-state): operates by the alternating access mechanism with a single substrate-binding site intermittently exposed to either the cytosolic (c-state) or matrix (m-state) side of the inner mitochondrial membrane. The polypeptide is ADP,ATP carrier protein 1, mitochondrial (ANT1) (Gossypium hirsutum (Upland cotton)).